A 100-amino-acid chain; its full sequence is NADH-quinone oxidoreductase subunit K (100 aa).

The next 3 helical transmembrane spans lie at 4–24 (LQHGLILAAILFVLGLTGLVI), 28–48 (LLFMLIGLEIMINASALAFVV), and 60–80 (VMYILAISLAAAEASIGLALL).

The protein belongs to the complex I subunit 4L family. NDH-1 is composed of 13 different subunits. Subunits NuoA, H, J, K, L, M, N constitute the membrane sector of the complex.

The protein resides in the cell inner membrane. The catalysed reaction is a quinone + NADH + 5 H(+)(in) = a quinol + NAD(+) + 4 H(+)(out). In terms of biological role, NDH-1 shuttles electrons from NADH, via FMN and iron-sulfur (Fe-S) centers, to quinones in the respiratory chain. The immediate electron acceptor for the enzyme in this species is believed to be ubiquinone. Couples the redox reaction to proton translocation (for every two electrons transferred, four hydrogen ions are translocated across the cytoplasmic membrane), and thus conserves the redox energy in a proton gradient. The sequence is that of NADH-quinone oxidoreductase subunit K from Citrobacter koseri (strain ATCC BAA-895 / CDC 4225-83 / SGSC4696).